Consider the following 118-residue polypeptide: Inner membrane protein YhaI (118 aa).

Residues 1–25 are Periplasmic-facing; the sequence is MQWYLSVLKNYVGFSGRARRKEYWM. The helical transmembrane segment at 26–46 threads the bilayer; the sequence is FTLINAIVGAIINVIQLILGL. A topological domain (cytoplasmic) is located at residue Glu-47. A helical membrane pass occupies residues 48–68; that stretch reads LPYLSMLYLLATFLPVLALAI. The Periplasmic portion of the chain corresponds to 69 to 77; sequence RRLHDTDRS. A helical transmembrane segment spans residues 78-98; the sequence is GAWALLFFVPFIGWLVLLVFF. Residues 99–118 are Cytoplasmic-facing; that stretch reads CTEGTSGSNRYGNDPKFGSN.

This sequence to E.coli YhaH.

It localises to the cell inner membrane. The protein is Inner membrane protein YhaI (yhaI) of Escherichia coli O157:H7.